A 277-amino-acid polypeptide reads, in one-letter code: Undecaprenyl-diphosphatase 2 (277 aa).

6 helical membrane-spanning segments follow: residues 43-63, 87-107, 109-129, 183-203, 214-234, and 254-274; these read RAMA…VWEF, LLIA…TIHE, LFNP…MLWA, AATE…AVYS, SDLP…MIAV, and IAFG…WTAA.

This sequence belongs to the UppP family.

The protein resides in the cell inner membrane. It catalyses the reaction di-trans,octa-cis-undecaprenyl diphosphate + H2O = di-trans,octa-cis-undecaprenyl phosphate + phosphate + H(+). Its function is as follows. Catalyzes the dephosphorylation of undecaprenyl diphosphate (UPP). Confers resistance to bacitracin. The chain is Undecaprenyl-diphosphatase 2 from Pseudomonas fluorescens (strain Pf0-1).